A 1466-amino-acid polypeptide reads, in one-letter code: Retrovirus-related Pol polyprotein from transposon RE1 (1466 aa).

A disordered region spans residues 227–270 (SHRNTTTTNNNNNGNRNNRYDNRNNNNNSKPWQQSSTNFHPNNN). Positions 229–254 (RNTTTTNNNNNGNRNNRYDNRNNNNN) are enriched in low complexity. Polar residues predominate over residues 255–270 (SKPWQQSSTNFHPNNN). The CCHC-type zinc-finger motif lies at 278–294 (KCQICGVQGHSAKRCSQ). D334 acts as the For protease activity in catalysis. Residues 519 to 682 (NSTRPLEYIY…SPFQKLFGTS (164 aa)) form the Integrase catalytic domain. 2 residues coordinate Mg(2+): D530 and D592. The disordered stretch occupies residues 772–927 (WSPHTTLPTR…NNNQAPLNTH (156 aa)). Composition is skewed to low complexity over residues 796 to 827 (AATPPSSPSAPFRNSQVSSSNLDSSFSSSFPS) and 836 to 898 (QNGP…SSTS). Positions 899–912 (PTPPSILIHPPPPL) are enriched in pro residues. The segment covering 915 to 927 (IVNNNNQAPLNTH) has biased composition (polar residues). One can recognise a Reverse transcriptase Ty1/copia-type domain in the interval 982–1225 (NHTWDLVPPP…ITAKPVTTPM (244 aa)).

It catalyses the reaction DNA(n) + a 2'-deoxyribonucleoside 5'-triphosphate = DNA(n+1) + diphosphate. The sequence is that of Retrovirus-related Pol polyprotein from transposon RE1 (RE1) from Arabidopsis thaliana (Mouse-ear cress).